The following is a 388-amino-acid chain: Lipid-A-disaccharide synthase (388 aa).

Belongs to the LpxB family.

It carries out the reaction a lipid X + a UDP-2-N,3-O-bis[(3R)-3-hydroxyacyl]-alpha-D-glucosamine = a lipid A disaccharide + UDP + H(+). The protein operates within bacterial outer membrane biogenesis; LPS lipid A biosynthesis. In terms of biological role, condensation of UDP-2,3-diacylglucosamine and 2,3-diacylglucosamine-1-phosphate to form lipid A disaccharide, a precursor of lipid A, a phosphorylated glycolipid that anchors the lipopolysaccharide to the outer membrane of the cell. This Burkholderia thailandensis (strain ATCC 700388 / DSM 13276 / CCUG 48851 / CIP 106301 / E264) protein is Lipid-A-disaccharide synthase.